A 383-amino-acid chain; its full sequence is Lipid-A-disaccharide synthase (383 aa).

This sequence belongs to the LpxB family.

The catalysed reaction is a lipid X + a UDP-2-N,3-O-bis[(3R)-3-hydroxyacyl]-alpha-D-glucosamine = a lipid A disaccharide + UDP + H(+). The protein operates within bacterial outer membrane biogenesis; LPS lipid A biosynthesis. Its function is as follows. Condensation of UDP-2,3-diacylglucosamine and 2,3-diacylglucosamine-1-phosphate to form lipid A disaccharide, a precursor of lipid A, a phosphorylated glycolipid that anchors the lipopolysaccharide to the outer membrane of the cell. In Syntrophus aciditrophicus (strain SB), this protein is Lipid-A-disaccharide synthase.